The primary structure comprises 336 residues: Holliday junction branch migration complex subunit RuvB (336 aa).

Residues 4–184 are large ATPase domain (RuvB-L); the sequence is ADRLISAGAT…FGIVQRLEFY (181 aa). ATP-binding positions include isoleucine 23, arginine 24, glycine 65, lysine 68, threonine 69, threonine 70, 131–133, arginine 174, tyrosine 184, and arginine 221; that span reads EDY. Threonine 69 provides a ligand contact to Mg(2+). The small ATPAse domain (RuvB-S) stretch occupies residues 185–255; sequence QVPDLQHIVG…IAAQALDMLN (71 aa). A head domain (RuvB-H) region spans residues 258 to 336; the sequence is AEGFDYMDRK…HFGITPPEMP (79 aa). Positions 294, 313, and 318 each coordinate DNA.

Belongs to the RuvB family. In terms of assembly, homohexamer. Forms an RuvA(8)-RuvB(12)-Holliday junction (HJ) complex. HJ DNA is sandwiched between 2 RuvA tetramers; dsDNA enters through RuvA and exits via RuvB. An RuvB hexamer assembles on each DNA strand where it exits the tetramer. Each RuvB hexamer is contacted by two RuvA subunits (via domain III) on 2 adjacent RuvB subunits; this complex drives branch migration. In the full resolvosome a probable DNA-RuvA(4)-RuvB(12)-RuvC(2) complex forms which resolves the HJ.

It is found in the cytoplasm. It catalyses the reaction ATP + H2O = ADP + phosphate + H(+). In terms of biological role, the RuvA-RuvB-RuvC complex processes Holliday junction (HJ) DNA during genetic recombination and DNA repair, while the RuvA-RuvB complex plays an important role in the rescue of blocked DNA replication forks via replication fork reversal (RFR). RuvA specifically binds to HJ cruciform DNA, conferring on it an open structure. The RuvB hexamer acts as an ATP-dependent pump, pulling dsDNA into and through the RuvAB complex. RuvB forms 2 homohexamers on either side of HJ DNA bound by 1 or 2 RuvA tetramers; 4 subunits per hexamer contact DNA at a time. Coordinated motions by a converter formed by DNA-disengaged RuvB subunits stimulates ATP hydrolysis and nucleotide exchange. Immobilization of the converter enables RuvB to convert the ATP-contained energy into a lever motion, pulling 2 nucleotides of DNA out of the RuvA tetramer per ATP hydrolyzed, thus driving DNA branch migration. The RuvB motors rotate together with the DNA substrate, which together with the progressing nucleotide cycle form the mechanistic basis for DNA recombination by continuous HJ branch migration. Branch migration allows RuvC to scan DNA until it finds its consensus sequence, where it cleaves and resolves cruciform DNA. The chain is Holliday junction branch migration complex subunit RuvB from Salmonella choleraesuis (strain SC-B67).